A 450-amino-acid chain; its full sequence is Exodeoxyribonuclease 7 large subunit (450 aa).

It belongs to the XseA family. Heterooligomer composed of large and small subunits.

The protein resides in the cytoplasm. The enzyme catalyses Exonucleolytic cleavage in either 5'- to 3'- or 3'- to 5'-direction to yield nucleoside 5'-phosphates.. Its function is as follows. Bidirectionally degrades single-stranded DNA into large acid-insoluble oligonucleotides, which are then degraded further into small acid-soluble oligonucleotides. This chain is Exodeoxyribonuclease 7 large subunit, found in Listeria monocytogenes serovar 1/2a (strain ATCC BAA-679 / EGD-e).